Consider the following 267-residue polypeptide: MNRLTHCFNELKQRNTKALVTFITAGDPDLATTQAMIPLLQQAGADIIELGMPFSDPMADGPTIQLSSERALAASTTLERILAMVRAVRRSCQVPIVLMGYLNPIHAYGYERFANDAAEAGVDGVLVVDMPPEEAESFLNHANARDLQVAFLLTPTSTDSRIATVGRLGRGFVYYVTVTGVTGARQQVSTTLGGELAKVRAKISVPIVAGFGISTPQQAADVAAMADGVVVGSALVKLFQLHSGEELRQEVTRFVASLRQAIPGGAA.

Active-site proton acceptor residues include Glu49 and Asp60.

This sequence belongs to the TrpA family. Tetramer of two alpha and two beta chains.

It carries out the reaction (1S,2R)-1-C-(indol-3-yl)glycerol 3-phosphate + L-serine = D-glyceraldehyde 3-phosphate + L-tryptophan + H2O. The protein operates within amino-acid biosynthesis; L-tryptophan biosynthesis; L-tryptophan from chorismate: step 5/5. Functionally, the alpha subunit is responsible for the aldol cleavage of indoleglycerol phosphate to indole and glyceraldehyde 3-phosphate. The polypeptide is Tryptophan synthase alpha chain (Pelobacter propionicus (strain DSM 2379 / NBRC 103807 / OttBd1)).